The chain runs to 219 residues: Probable nicotinate-nucleotide adenylyltransferase (219 aa).

The protein belongs to the NadD family.

The enzyme catalyses nicotinate beta-D-ribonucleotide + ATP + H(+) = deamido-NAD(+) + diphosphate. Its pathway is cofactor biosynthesis; NAD(+) biosynthesis; deamido-NAD(+) from nicotinate D-ribonucleotide: step 1/1. In terms of biological role, catalyzes the reversible adenylation of nicotinate mononucleotide (NaMN) to nicotinic acid adenine dinucleotide (NaAD). The chain is Probable nicotinate-nucleotide adenylyltransferase from Herminiimonas arsenicoxydans.